The chain runs to 259 residues: Snake venom serine proteinase 2 (259 aa).

A signal peptide spans 1–18; that stretch reads MVLIRVLANLLILQLSYA. Positions 19–24 are excised as a propeptide; it reads QKSSEL. Positions 25-250 constitute a Peptidase S1 domain; that stretch reads IFGGRPCNRN…HLDWIQSIIA (226 aa). Cystine bridges form between C31–C162, C49–C65, C97–C257, C141–C211, C173–C190, and C201–C226. Residues H64 and D109 each act as charge relay system in the active site. S205 functions as the Charge relay system in the catalytic mechanism.

This sequence belongs to the peptidase S1 family. Snake venom subfamily. As to quaternary structure, monomer. As to expression, expressed by the venom gland.

The protein resides in the secreted. Snake venom serine protease that may act in the hemostasis system of the prey. This chain is Snake venom serine proteinase 2, found in Crotalus adamanteus (Eastern diamondback rattlesnake).